A 753-amino-acid chain; its full sequence is Probable tubulin--tyrosine ligase PBY1 (753 aa).

The TTL domain occupies 343–734 (MEYIYKPLTH…PIFNENRNKT (392 aa)).

The protein belongs to the tubulin--tyrosine ligase family. The cofactor is Mg(2+). K(+) is required as a cofactor.

Its subcellular location is the cytoplasm. It localises to the P-body. It carries out the reaction C-terminal L-alpha-aminoacyl-L-glutamyl-L-glutamyl-[tubulin] + L-tyrosine + ATP = C-terminal L-alpha-aminoacyl-L-glutamyl-L-glutamyl-L-tyrosyl-[tubulin] + ADP + phosphate + H(+). Functionally, probable P-body-associated tubulin--tyrosine ligase. The chain is Probable tubulin--tyrosine ligase PBY1 (PBY1) from Saccharomyces cerevisiae (strain ATCC 204508 / S288c) (Baker's yeast).